Consider the following 715-residue polypeptide: Protein DOA1 (715 aa).

7 WD repeats span residues Gly-11–Ser-40, Gly-53–Pro-82, Gly-97–Lys-125, Ala-135–Gln-166, Ile-177–Asp-206, Gly-218–Ser-247, and Leu-259–Ser-288. A Phosphoserine modification is found at Ser-332. The PFU domain occupies Ala-352 to Asp-449. Residues Phe-434–Asn-440 form an interaction with HSE1 region. Positions Lys-465 to Ser-715 constitute a PUL domain. 6 ARM repeats span residues Tyr-478–Ile-512, Asp-513–Ile-543, Val-544–Asn-582, Glu-583–Lys-635, Gly-636–Val-680, and Glu-681–Ser-715.

This sequence belongs to the WD repeat PLAP family. Forms a complex composed of CDC48, NPL4, UFD1, DOA1, SHP1 and deubiquitinase OTU1; within the complex interacts with CDC48. Interacts (via PUL domain) with CDC48 (via C-terminus); the interaction is direct. Forms a complex composed of CDC48, DOA1, deubiquitinase UBP3 and probably BRE5; within the complex interacts with CDC48 and UBP3. May form a complex composed of VPS27, HSE1 and DOA1. Interacts with HSE1 (via SH3 domain). Interacts (via WD repeats and PFU domain) with ubiquitin; the interaction is direct. Interacts with ubiquitinated FZO1 but not unmodified FZO1; the interaction recruits FZO1 to CDC48 and promotes FZO1 proteasomal degradation.

The protein localises to the nucleus. It localises to the cytoplasm. The protein resides in the mitochondrion outer membrane. Its subcellular location is the endosome membrane. Functionally, ubiquitin-binding protein involved in protein ubiquitination, sorting and degradation. Acts as a ubiquitinated substrate-recruiting adapter for chaperone ATPase CDC48 by binding mono- or polyubiquitin chains. Depending on the context, promotes or prevents proteasomal degradation of ubiquitinated proteins. Involved in the ubiquitin fusion degradation (UFD) pathway by promoting the degradation of ubiquitinated proteins. Involved in the mitochondria-associated degradation pathway (MAD) by promoting the degradation of several ubiquitinated membrane proteins. By competing with UFD2 to bind CDC48, prevents the multi-ubiquitination and subsequent degradation of UFD2-dependent substrates. Required for ribophagy, a process which relocalizes ribosomal particles into the vacuole for degradation in response to starvation. Involved in the ubiquitin-mediated sorting of membrane proteins into multivesicular bodies (MVBs). In addition, plays an essential role in maintaining cellular ubiquitin levels. May affect indirectly the degradation of ubiquitinylated proteins by regulating cellular ubiquitin levels. This is Protein DOA1 from Saccharomyces cerevisiae (strain ATCC 204508 / S288c) (Baker's yeast).